Reading from the N-terminus, the 212-residue chain is Ribonuclease HII (212 aa).

The region spanning 20–209 (TCVVGVDEVG…VHNILYQEAS (190 aa)) is the RNase H type-2 domain. A divalent metal cation-binding residues include Asp-26, Glu-27, and Asp-117.

The protein belongs to the RNase HII family. Mn(2+) serves as cofactor. It depends on Mg(2+) as a cofactor.

It is found in the cytoplasm. It carries out the reaction Endonucleolytic cleavage to 5'-phosphomonoester.. Functionally, endonuclease that specifically degrades the RNA of RNA-DNA hybrids. The chain is Ribonuclease HII from Cereibacter sphaeroides (strain ATCC 17023 / DSM 158 / JCM 6121 / CCUG 31486 / LMG 2827 / NBRC 12203 / NCIMB 8253 / ATH 2.4.1.) (Rhodobacter sphaeroides).